Consider the following 429-residue polypeptide: Glucose-1-phosphate adenylyltransferase (429 aa).

Residues Gly-162, 177 to 178 (EK), and Ser-209 contribute to the alpha-D-glucose 1-phosphate site.

This sequence belongs to the bacterial/plant glucose-1-phosphate adenylyltransferase family. In terms of assembly, homotetramer.

It carries out the reaction alpha-D-glucose 1-phosphate + ATP + H(+) = ADP-alpha-D-glucose + diphosphate. It functions in the pathway glycan biosynthesis; glycogen biosynthesis. Functionally, involved in the biosynthesis of ADP-glucose, a building block required for the elongation reactions to produce glycogen. Catalyzes the reaction between ATP and alpha-D-glucose 1-phosphate (G1P) to produce pyrophosphate and ADP-Glc. The sequence is that of Glucose-1-phosphate adenylyltransferase from Nostoc punctiforme (strain ATCC 29133 / PCC 73102).